A 387-amino-acid polypeptide reads, in one-letter code: Galactokinase (387 aa).

A substrate-binding site is contributed by 33–36 (EHID). ATP is bound by residues Ser-67 and 124–130 (GAGLSSS). The Mg(2+) site is built by Ser-130 and Glu-162. Asp-174 serves as the catalytic Proton acceptor. Tyr-224 is a substrate binding site.

It belongs to the GHMP kinase family. GalK subfamily.

Its subcellular location is the cytoplasm. The enzyme catalyses alpha-D-galactose + ATP = alpha-D-galactose 1-phosphate + ADP + H(+). It participates in carbohydrate metabolism; galactose metabolism. Functionally, catalyzes the transfer of the gamma-phosphate of ATP to D-galactose to form alpha-D-galactose-1-phosphate (Gal-1-P). The polypeptide is Galactokinase (Clostridium perfringens (strain 13 / Type A)).